The chain runs to 352 residues: Phosphoribosylformylglycinamidine cyclo-ligase (352 aa).

Belongs to the AIR synthase family.

It is found in the cytoplasm. The enzyme catalyses 2-formamido-N(1)-(5-O-phospho-beta-D-ribosyl)acetamidine + ATP = 5-amino-1-(5-phospho-beta-D-ribosyl)imidazole + ADP + phosphate + H(+). The protein operates within purine metabolism; IMP biosynthesis via de novo pathway; 5-amino-1-(5-phospho-D-ribosyl)imidazole from N(2)-formyl-N(1)-(5-phospho-D-ribosyl)glycinamide: step 2/2. The protein is Phosphoribosylformylglycinamidine cyclo-ligase of Pseudomonas entomophila (strain L48).